A 218-amino-acid chain; its full sequence is Guanylate kinase (218 aa).

Residues 10–190 (GLLIILSSPS…TEERLKTIIT (181 aa)) enclose the Guanylate kinase-like domain. Residue 17-24 (SPSGAGKS) participates in ATP binding.

Belongs to the guanylate kinase family.

The protein resides in the cytoplasm. It carries out the reaction GMP + ATP = GDP + ADP. In terms of biological role, essential for recycling GMP and indirectly, cGMP. This Jannaschia sp. (strain CCS1) protein is Guanylate kinase.